A 547-amino-acid chain; its full sequence is Zinc metalloproteinase-disintegrin-like BjussuMP-1 (547 aa).

A propeptide spanning residues 1–133 (EFKVNGEPVV…KKASKLVVTA (133 aa)) is cleaved from the precursor. Residues 141-337 (RYVEIVVVVD…HNPQCILNEP (197 aa)) form the Peptidase M12B domain. Ca(2+) contacts are provided by glutamate 144 and aspartate 228. 3 disulfide bridges follow: cysteine 252–cysteine 332, cysteine 292–cysteine 316, and cysteine 294–cysteine 299. Histidine 277 is a Zn(2+) binding site. Glutamate 278 is a catalytic residue. Positions 281 and 287 each coordinate Zn(2+). The Ca(2+) site is built by cysteine 332, asparagine 335, valine 341, asparagine 344, leucine 346, glutamate 348, glutamate 351, and aspartate 354. The Disintegrin domain maps to 339–421 (LTVSGNELLE…DCPRNRFHRN (83 aa)). 11 disulfide bridges follow: cysteine 353–cysteine 363, cysteine 362–cysteine 385, cysteine 376–cysteine 382, cysteine 381–cysteine 406, cysteine 394–cysteine 413, cysteine 425–cysteine 437, cysteine 444–cysteine 494, cysteine 459–cysteine 501, cysteine 472–cysteine 482, cysteine 489–cysteine 526, and cysteine 520–cysteine 531. The N-linked (GlcNAc...) asparagine glycan is linked to asparagine 451. N-linked (GlcNAc...) asparagine glycosylation is present at asparagine 504.

Belongs to the venom metalloproteinase (M12B) family. P-III subfamily. P-IIIa sub-subfamily. Monomer. Requires Zn(2+) as cofactor. As to expression, expressed by the venom gland.

It is found in the secreted. Completely inhibited by EDTA, EGTA, 1,10-phenanthroline, and partially by beta-mercaptoethanol. Is not inhibited by aprotinin and leupeptin. In terms of biological role, this protein is a zinc metalloprotease from snake venom that causes hemorrhage in mice after intradermal injection. It inhibits platelet aggregation induced by collagen and ADP. Has moderate edema activity, but no myotoxic activity. It hydrolyzes the Aalpha-chain and more slowly the Bbeta-chain of fibrinogen, without affecting the gamma-chains. It also shows proteolytic activity on casein. It is unable to clot plasma. It also shows bactericidal activity against E.coli and S.aureus. The chain is Zinc metalloproteinase-disintegrin-like BjussuMP-1 from Bothrops jararacussu (Jararacussu).